The primary structure comprises 170 residues: MAAAAQAPAAAKVVVATSPRAGGGGGGGGDRKVVPVVVAAAAGDEAQSEMHVLAVDDSSVDRAVIAKILRSSKYRVTTVESATRALELLCLGLVPNVNMIITDYWMPGMTGYELLKRVKESSQLKEIPVVIMSSENVPNRISRCLEEGAEDFLLKPVRPSDVSRLCSRIR.

One can recognise a Response regulatory domain in the interval 51–170 (HVLAVDDSSV…DVSRLCSRIR (120 aa)). A 4-aspartylphosphate modification is found at Asp103.

Belongs to the ARR family. Type-A subfamily. Post-translationally, two-component system major event consists of a His-to-Asp phosphorelay between a sensor histidine kinase (HK) and a response regulator (RR). In plants, the His-to-Asp phosphorelay involves an additional intermediate named Histidine-containing phosphotransfer protein (HPt). This multistep phosphorelay consists of a His-Asp-His-Asp sequential transfer of a phosphate group between first a His and an Asp of the HK protein, followed by the transfer to a conserved His of the HPt protein and finally the transfer to an Asp in the receiver domain of the RR protein. As to expression, expressed in roots, leaf blades, leaf sheaths, shoot apex, flowers and panicles.

Functionally, functions as a response regulator involved in His-to-Asp phosphorelay signal transduction system. Phosphorylation of the Asp residue in the receiver domain activates the ability of the protein to promote the transcription of target genes. Type-A response regulators seem to act as negative regulators of the cytokinin signaling. The sequence is that of Two-component response regulator ORR6 from Oryza sativa subsp. japonica (Rice).